Here is a 425-residue protein sequence, read N- to C-terminus: Inhibin beta A chain (425 aa).

Positions 1 to 20 are cleaved as a signal peptide; it reads MPLLWLRGFLLASCWIIVRS. A propeptide spanning residues 21–309 is cleaved from the precursor; sequence SPTPGSEGHS…EDHPHRRRRR (289 aa). N-linked (GlcNAc...) asparagine glycosylation is present at Asn165. The disordered stretch occupies residues 260–289; that stretch reads KKRKEEEGEGKKRDGEGGAGGDEEKEQSHR. The segment covering 263–275 has biased composition (basic and acidic residues); it reads KEEEGEGKKRDGE. 4 disulfides stabilise this stretch: Cys313–Cys321, Cys320–Cys390, Cys349–Cys422, and Cys353–Cys424.

The protein belongs to the TGF-beta family. In terms of assembly, dimeric, linked by one or more disulfide bonds. Inhibin A is a dimer of alpha/INHA and beta-A/INHBA. Activin A is a homodimer of beta-A/INHBA. Activin AB is a dimer of beta-A/INHBA and beta-B/INHBB. Interacts with FST and FSTL3; these interactions prevent activin A interaction to its type II receptor. Activin A interacts with ACVR2A. Activin A interacts with BMPR2. Inhibin A interacts with ACVR1; this interaction creates a non-signaling complex (NSC) that inhibits ACVR1-mediated BMP signaling. Inhibin A interacts with ACVR2A.

It localises to the secreted. In terms of biological role, inhibins/activins are involved in regulating a number of diverse functions such as hypothalamic and pituitary hormone secretion, gonadal hormone secretion, germ cell development and maturation, erythroid differentiation, insulin secretion, nerve cell survival, embryonic axial development or bone growth, depending on their subunit composition. Functionally, activin A is a homodimer of INHBA that plays a role in several essential biological processes including embryonic development, stem cell maintenance and differentiation, haematopoiesis, cell proliferation and tissue fibrosis. Signals through type I (such as ACVR1B or ACVR1C) and type II receptors (such as ACVR2A, ACVR2B or BMPR2) which, upon ligand binding, phosphorylate SMAD2 and SMAD3 intracellular signaling mediators that form a complex with SMAD4, translocate to the nucleus and modulate gene expression. Can also activate alternative non-canonical intracellular signaling pathways including the p38 MAPK, extracellular signal-regulated kinases 1/2 (ERK1/2) and c-Jun N-terminal kinases (JNKs) to modulate cell migration and differentiation. Alternatively, promotes osteoblastic differentiation via ACVRL1-SMAD1/5/9 pathway. In addition, can engage the type I receptor ACVR1 to form an ACVR1-activin A-type II receptor non-signaling complex (NSC) that renders receptors unavailable for engagement with BMPs, hence resulting in an apparent inhibition of ACVR1-mediated BMP signaling. Inhibin A is a dimer of alpha/INHA and beta-A/INHBA that functions as a feedback regulator in the hypothalamic-pituitary-gonadal (HPG) axis. Inhibits the secretion of FSH from the anterior pituitary gland by acting on pituitary gonadotrope cells. Antagonizes activin A by binding to the proteoglycan, betaglycan, and forming a stable complex with and, thereby, sequestering type II activin receptors while excluding type I receptor. This chain is Inhibin beta A chain (INHBA), found in Ovis aries (Sheep).